The following is a 297-amino-acid chain: tRNA pseudouridine synthase A (297 aa).

The active-site Nucleophile is the Asp-57. Position 115 (Tyr-115) interacts with substrate.

The protein belongs to the tRNA pseudouridine synthase TruA family. In terms of assembly, homodimer.

It catalyses the reaction uridine(38/39/40) in tRNA = pseudouridine(38/39/40) in tRNA. Functionally, formation of pseudouridine at positions 38, 39 and 40 in the anticodon stem and loop of transfer RNAs. The protein is tRNA pseudouridine synthase A of Nitratidesulfovibrio vulgaris (strain ATCC 29579 / DSM 644 / CCUG 34227 / NCIMB 8303 / VKM B-1760 / Hildenborough) (Desulfovibrio vulgaris).